The chain runs to 211 residues: Orotidine 5'-phosphate decarboxylase (211 aa).

Substrate is bound by residues Asp-7, Lys-29, 57 to 66 (DLKLADIPNT), Ser-109, 162 to 172 (PGIGAQGGSPV), Gly-185, and Arg-186. Lys-59 serves as the catalytic Proton donor.

Belongs to the OMP decarboxylase family. Type 1 subfamily. As to quaternary structure, homodimer.

It catalyses the reaction orotidine 5'-phosphate + H(+) = UMP + CO2. It participates in pyrimidine metabolism; UMP biosynthesis via de novo pathway; UMP from orotate: step 2/2. Catalyzes the decarboxylation of orotidine 5'-monophosphate (OMP) to uridine 5'-monophosphate (UMP). In Pyrococcus furiosus (strain ATCC 43587 / DSM 3638 / JCM 8422 / Vc1), this protein is Orotidine 5'-phosphate decarboxylase.